The sequence spans 51 residues: Large ribosomal subunit protein bL33 (51 aa).

The interval 1-23 (MREKIKLESSAGTGHFYTTTKNK) is disordered. Residues 10 to 20 (SAGTGHFYTTT) are compositionally biased toward polar residues.

The protein belongs to the bacterial ribosomal protein bL33 family.

The polypeptide is Large ribosomal subunit protein bL33 (Methylobacillus flagellatus (strain ATCC 51484 / DSM 6875 / VKM B-1610 / KT)).